The following is a 521-amino-acid chain: Probable protein kinase UbiB (521 aa).

The Protein kinase domain maps to 119 to 497 (SFEREPVASA…QKLTNRLLQA (379 aa)). ATP is bound by residues 125–133 (VASASIAQV) and lysine 151. Catalysis depends on aspartate 286, which acts as the Proton acceptor. Residues 496 to 516 (QAIVSAGIGFVIALILLQLVV) traverse the membrane as a helical segment.

It belongs to the ABC1 family. UbiB subfamily.

The protein resides in the cell inner membrane. The protein operates within cofactor biosynthesis; ubiquinone biosynthesis [regulation]. Is probably a protein kinase regulator of UbiI activity which is involved in aerobic coenzyme Q (ubiquinone) biosynthesis. The sequence is that of Probable protein kinase UbiB from Delftia acidovorans (strain DSM 14801 / SPH-1).